The sequence spans 73 residues: V-type proton ATPase subunit e (73 aa).

At 1–3 (MSS) the chain is on the lumenal side. The helical transmembrane segment at 4–24 (FYTVVGVFIVVSAMSVLFWIM) threads the bilayer. Residues 25–35 (APKNNQAVWRS) lie on the Cytoplasmic side of the membrane. Residues 36-56 (TVILTLAMMFLMWAITFLCQL) traverse the membrane as a helical segment. At 57–73 (HPLVAPRRSDLRPEFAE) the chain is on the lumenal side.

It belongs to the V-ATPase e1/e2 subunit family. In terms of assembly, V-ATPase is a heteromultimeric enzyme composed of a peripheral catalytic V1 complex (components A to H) attached to an integral membrane V0 proton pore complex (components: a, c, c', c'', d, e, f and VOA1).

The protein resides in the vacuole membrane. Subunit of the V0 complex of vacuolar(H+)-ATPase (V-ATPase), a multisubunit enzyme composed of a peripheral complex (V1) that hydrolyzes ATP and a membrane integral complex (V0) that translocates protons. V-ATPase is responsible for acidifying and maintaining the pH of intracellular compartments. This is V-type proton ATPase subunit e (VMA9) from Saccharomyces cerevisiae (strain ATCC 204508 / S288c) (Baker's yeast).